Reading from the N-terminus, the 406-residue chain is Arginine deiminase (406 aa).

Catalysis depends on C396, which acts as the Amidino-cysteine intermediate.

This sequence belongs to the arginine deiminase family.

It localises to the cytoplasm. It carries out the reaction L-arginine + H2O = L-citrulline + NH4(+). It functions in the pathway amino-acid degradation; L-arginine degradation via ADI pathway; carbamoyl phosphate from L-arginine: step 1/2. This Vibrio campbellii (strain ATCC BAA-1116) protein is Arginine deiminase.